The chain runs to 462 residues: EPD1-interacting receptor-like cytoplasmic serine/threonine-protein kinase 5A (462 aa).

The region spanning 85–366 is the Protein kinase domain; sequence FSSANFLGEG…DVVNILEPLL (282 aa). Residues 91 to 99 and Lys120 each bind ATP; that span reads LGEGGFGPV. Phosphotyrosine occurs at positions 165 and 167. Catalysis depends on Asp215, which acts as the Proton acceptor.

This sequence belongs to the protein kinase superfamily. Ser/Thr protein kinase family. Interacts with the Verticillium dahliae elicitor EPD1 (AC G2WWH6). In terms of processing, phosphorylated at Tyr-165 and Tyr-167 in the presence of pathogen-associated molecular patterns (PAMPs); this triggers the expression of pathogenesis-related genes (e.g. PR5 and PR16). Mostly expressed in roots and, to a lesser extent, in leaves.

Its subcellular location is the cell membrane. The enzyme catalyses L-seryl-[protein] + ATP = O-phospho-L-seryl-[protein] + ADP + H(+). The catalysed reaction is L-threonyl-[protein] + ATP = O-phospho-L-threonyl-[protein] + ADP + H(+). In terms of biological role, required for pathogen-associated molecular pattern (PAMP, e.g. chitin and flg22)-triggered immunity (PTI) involving reactive oxygen species (ROS) accumulation and triggering plant defense, including defense-related gene expression (e.g. PR1 and LOX). Ensures specific recognition of the EPD1 effector of Verticillium dahliae, resulting in a hypersensitive response known as effector-triggered immunity (ETI), characterized by the activation of programmed cell death to limit infection by the pathogen. Priming plants with the incompatible pathogen V.dahliae leads to an increased resistance to compatible pathogens, as a result of systemic acquired resistance (SAR). The protein is EPD1-interacting receptor-like cytoplasmic serine/threonine-protein kinase 5A of Gossypium barbadense (Sea Island cotton).